We begin with the raw amino-acid sequence, 59 residues long: Large ribosomal subunit protein uL30 (59 aa).

Belongs to the universal ribosomal protein uL30 family. In terms of assembly, part of the 50S ribosomal subunit.

The chain is Large ribosomal subunit protein uL30 from Clostridium botulinum (strain 657 / Type Ba4).